A 320-amino-acid chain; its full sequence is Ferrochelatase (320 aa).

Residues H194 and E275 each contribute to the Fe cation site.

It belongs to the ferrochelatase family.

The protein resides in the cytoplasm. The catalysed reaction is heme b + 2 H(+) = protoporphyrin IX + Fe(2+). It functions in the pathway porphyrin-containing compound metabolism; protoheme biosynthesis; protoheme from protoporphyrin-IX: step 1/1. Functionally, catalyzes the ferrous insertion into protoporphyrin IX. In Vibrio parahaemolyticus serotype O3:K6 (strain RIMD 2210633), this protein is Ferrochelatase.